The primary structure comprises 191 residues: Thymidine kinase (191 aa).

ATP is bound by residues 9–16 and 85–88; these read GSMNSGKT and DESQ. E86 functions as the Proton acceptor in the catalytic mechanism. The Zn(2+) site is built by C143, C146, C181, and C184.

The protein belongs to the thymidine kinase family. As to quaternary structure, homotetramer.

It localises to the cytoplasm. The catalysed reaction is thymidine + ATP = dTMP + ADP + H(+). This is Thymidine kinase from Listeria monocytogenes serotype 4b (strain F2365).